We begin with the raw amino-acid sequence, 361 residues long: Phospho-N-acetylmuramoyl-pentapeptide-transferase (361 aa).

Helical transmembrane passes span 25-45 (RGILAALTALFLSLWMGPAVI), 73-93 (TMGGSLILLTVTLSVLLWGDL), 98-118 (VWLVLAVMICFGAIGWYDDWI), 139-159 (IFGLAAGLFLYYTADVPAAIT), 168-188 (IALPLAGVSFVVIAYFWIVGF), 200-220 (GLAIMPTVLVACALGVFAYAS), 237-257 (AGELIIICSAIAGAGLGFLWF), 264-284 (VFMGDIGALSLGAVLGTIAVI), 290-310 (VLVIMGGVFVIETLSVMIQVV), and 339-359 (VIVRFWIISVVLVLIGLATLK).

It belongs to the glycosyltransferase 4 family. MraY subfamily. Mg(2+) is required as a cofactor.

Its subcellular location is the cell inner membrane. It carries out the reaction UDP-N-acetyl-alpha-D-muramoyl-L-alanyl-gamma-D-glutamyl-meso-2,6-diaminopimeloyl-D-alanyl-D-alanine + di-trans,octa-cis-undecaprenyl phosphate = di-trans,octa-cis-undecaprenyl diphospho-N-acetyl-alpha-D-muramoyl-L-alanyl-D-glutamyl-meso-2,6-diaminopimeloyl-D-alanyl-D-alanine + UMP. It functions in the pathway cell wall biogenesis; peptidoglycan biosynthesis. Catalyzes the initial step of the lipid cycle reactions in the biosynthesis of the cell wall peptidoglycan: transfers peptidoglycan precursor phospho-MurNAc-pentapeptide from UDP-MurNAc-pentapeptide onto the lipid carrier undecaprenyl phosphate, yielding undecaprenyl-pyrophosphoryl-MurNAc-pentapeptide, known as lipid I. The protein is Phospho-N-acetylmuramoyl-pentapeptide-transferase of Xanthomonas euvesicatoria pv. vesicatoria (strain 85-10) (Xanthomonas campestris pv. vesicatoria).